A 172-amino-acid chain; its full sequence is MEKMYNVGKIVNTHGLIGEIRVIATTDFPEERFQVGNTVYLFEKNSKKPEKLIIRSHRKHKNFDLLMFEGFTGIHQVERMKEGVLKIKEAQLTDLEENEFYFHEIIGCIVVTTDGKELGEITEILTPGANDVWVVKGSDKKEKLIPYIADVVKEININDKKITIEVMEGLLD.

The region spanning 96–170 (EENEFYFHEI…KITIEVMEGL (75 aa)) is the PRC barrel domain.

The protein belongs to the RimM family. Binds ribosomal protein uS19.

The protein localises to the cytoplasm. An accessory protein needed during the final step in the assembly of 30S ribosomal subunit, possibly for assembly of the head region. Essential for efficient processing of 16S rRNA. May be needed both before and after RbfA during the maturation of 16S rRNA. It has affinity for free ribosomal 30S subunits but not for 70S ribosomes. The polypeptide is Ribosome maturation factor RimM (Listeria monocytogenes serotype 4b (strain CLIP80459)).